Here is a 479-residue protein sequence, read N- to C-terminus: Glutamate--tRNA ligase 2 (479 aa).

A 'HIGH' region motif is present at residues 18–28 (PSPTGFLHIGG). A 'KMSKS' region motif is present at residues 244–248 (KLSKR). Lysine 247 contacts ATP.

Belongs to the class-I aminoacyl-tRNA synthetase family. Glutamate--tRNA ligase type 1 subfamily. In terms of assembly, monomer.

Its subcellular location is the cytoplasm. The enzyme catalyses tRNA(Glu) + L-glutamate + ATP = L-glutamyl-tRNA(Glu) + AMP + diphosphate. Its function is as follows. Catalyzes the attachment of glutamate to tRNA(Glu) in a two-step reaction: glutamate is first activated by ATP to form Glu-AMP and then transferred to the acceptor end of tRNA(Glu). In Maricaulis maris (strain MCS10) (Caulobacter maris), this protein is Glutamate--tRNA ligase 2.